Reading from the N-terminus, the 596-residue chain is Transcription factor IIIB 70 kDa subunit (596 aa).

The segment at 1–33 adopts a TFIIB-type zinc-finger fold; it reads MPVCKNCHGTEFERDLSNANNDLVCKACGVVSE. The Zn(2+) site is built by Cys4, Cys7, Cys25, and Cys28. 2 tandem repeats follow at residues 90-166 and 185-264. Disordered regions lie at residues 363–421 and 509–534; these read GENI…NESG and IATG…EPTK. Over residues 365–375 the composition is skewed to basic and acidic residues; the sequence is NIYHEGSENET. Phosphoserine occurs at positions 381 and 384. The span at 388–421 shows a compositional bias: basic and acidic residues; it reads EHVEGEDKETEGTEEKVKKVKTKTSEEKKENESG. Basic residues predominate over residues 516–526; sequence VKKKRTRRRNN.

It belongs to the TFIIB family. As to quaternary structure, TFIIIB comprises the TATA-binding protein (TBP), the B-related factor (BRF) and the B' component (TFC5).

The protein resides in the nucleus. Functionally, general activator of RNA polymerase III transcription. Interacts with TBP. Binds to Pol III subunit C34 and to the TAU135 component of TFIIIC. This Saccharomyces cerevisiae (strain ATCC 204508 / S288c) (Baker's yeast) protein is Transcription factor IIIB 70 kDa subunit (BRF1).